A 458-amino-acid chain; its full sequence is MNKANPKNIPPLAPKKVFIKTYGCQMNVYDSQRMTDSLSSKGYVATQTPNDADLILVNTCHIREKAAEKLYSDLGRLRVMRQERTPDKPLMVGVTGCVAQAEGSEILRRAPIVDLVIGPQMYHRLPDLLEQTKQGKKIVATEYAVEDKFAHLPPHNKRAVRKRGVSAFLTVQEGCDKFCTFCVVPYTRGAEISRSVEQITEEARQLIEAGVKEITLLGQNVNGWHGQNVNGKTWRLGDLLYHLAKLDGLKRLRYTTSHPRDMDDSLIAAHRDLDILMPYLHLPVQSGSDRILKAMNRQHKSIHYLQLIEKIRNARPDIAFSGDFIVGFPGETDEDFEETIKLIKQVEYSSAYSFKYSPRPGTVGATMKNHVEEAVKDARLQHLQVLLLEQQNAFLRSKIGQTTDVLIEKAGRHSGQMVGRSPWLLPVVVDTQASTGTVIPIHIKNTSSNSFVGEMTNM.

Positions Lys15–Gln134 constitute an MTTase N-terminal domain. Residues Cys24, Cys60, Cys97, Cys175, Cys179, and Cys182 each coordinate [4Fe-4S] cluster. The region spanning Arg161–Ala393 is the Radical SAM core domain. The 62-residue stretch at Arg396 to Asn457 folds into the TRAM domain.

It belongs to the methylthiotransferase family. MiaB subfamily. Monomer. [4Fe-4S] cluster is required as a cofactor.

The protein resides in the cytoplasm. It catalyses the reaction N(6)-dimethylallyladenosine(37) in tRNA + (sulfur carrier)-SH + AH2 + 2 S-adenosyl-L-methionine = 2-methylsulfanyl-N(6)-dimethylallyladenosine(37) in tRNA + (sulfur carrier)-H + 5'-deoxyadenosine + L-methionine + A + S-adenosyl-L-homocysteine + 2 H(+). Functionally, catalyzes the methylthiolation of N6-(dimethylallyl)adenosine (i(6)A), leading to the formation of 2-methylthio-N6-(dimethylallyl)adenosine (ms(2)i(6)A) at position 37 in tRNAs that read codons beginning with uridine. The chain is tRNA-2-methylthio-N(6)-dimethylallyladenosine synthase from Bartonella henselae (strain ATCC 49882 / DSM 28221 / CCUG 30454 / Houston 1) (Rochalimaea henselae).